We begin with the raw amino-acid sequence, 122 residues long: Piercer of microtubule wall 2 protein (122 aa).

Positions 1-23 (MARETDCDLDKKTSLTSDAEMRP) are enriched in basic and acidic residues. Disordered stretches follow at residues 1–26 (MARETDCDLDKKTSLTSDAEMRPEPP) and 99–122 (QNNSLNVGPDRTRTIDSPNYQHTL). Residues 113–122 (IDSPNYQHTL) are compositionally biased toward polar residues.

The protein belongs to the PIERCE2 family. As to quaternary structure, microtubule inner protein component of sperm flagellar doublet microtubules. Interacts with CFAP53, ODAD1 and ODAD3; the interactions link the outer dynein arms docking complex (ODA-DC) to the internal microtubule inner proteins (MIP) in cilium axoneme.

It localises to the cytoplasm. It is found in the cytoskeleton. Its subcellular location is the cilium axoneme. The protein resides in the flagellum axoneme. Its function is as follows. Microtubule inner protein involved in the attachment of outer dynein arms (ODAs) to dynein-decorated doublet microtubules (DMTs) in cilia axoneme, which is required for motile cilia beating. In Mus musculus (Mouse), this protein is Piercer of microtubule wall 2 protein.